The chain runs to 214 residues: Adenylate kinase (214 aa).

10–15 (GAGKGT) is an ATP binding site. Positions 30 to 59 (STGDMLRAAIKAGTELGKQAKTLMDAGQLV) are NMP. AMP is bound by residues Thr-31, Arg-36, 57–59 (QLV), 85–88 (GFPR), and Gln-92. Residues 122 to 159 (GRRVHPASGRSYHVVYNPPKVEGKDDVTGEDLIIRADD) are LID. ATP contacts are provided by residues Arg-123 and 132–133 (SY). Residues Arg-156 and Arg-167 each contribute to the AMP site. Gln-200 provides a ligand contact to ATP.

It belongs to the adenylate kinase family. Monomer.

It localises to the cytoplasm. It catalyses the reaction AMP + ATP = 2 ADP. It participates in purine metabolism; AMP biosynthesis via salvage pathway; AMP from ADP: step 1/1. Catalyzes the reversible transfer of the terminal phosphate group between ATP and AMP. Plays an important role in cellular energy homeostasis and in adenine nucleotide metabolism. This chain is Adenylate kinase, found in Actinobacillus succinogenes (strain ATCC 55618 / DSM 22257 / CCUG 43843 / 130Z).